A 1221-amino-acid polypeptide reads, in one-letter code: A disintegrin and metalloproteinase with thrombospondin motifs 18 (1221 aa).

Positions 1 to 47 (MECALLLACAFPAAGSGPPRGLAGLGRVAKALQLCCLCCASVAAALA) are cleaved as a signal peptide. The propeptide occupies 48 to 284 (SDSSSGASGL…EYGSSGRPRR (237 aa)). N151 and N190 each carry an N-linked (GlcNAc...) asparagine glycan. A Cysteine switch motif is present at residues 252–259 (HFCGRRKK). A Zn(2+)-binding site is contributed by C254. The segment at 258–291 (KKYAPKPPTEDTYLRFDEYGSSGRPRRSAGKSQK) is disordered. A compositionally biased stretch (basic and acidic residues) spans 265 to 275 (PTEDTYLRFDE). The 206-residue stretch at 293–498 (LNVETLVVAD…PQAGCLVDEP (206 aa)) folds into the Peptidase M12B domain. N313 carries N-linked (GlcNAc...) asparagine glycosylation. 11 disulfide bridges follow: C369-C420, C395-C402, C414-C493, C453-C477, C521-C546, C532-C553, C541-C572, C566-C577, C601-C638, C605-C643, and C616-C628. Position 436 (H436) interacts with Zn(2+). Residue E437 is part of the active site. 2 residues coordinate Zn(2+): H440 and H446. One can recognise a Disintegrin domain in the interval 498-577 (PKQAGQYKYP…LSMWCRQGQC (80 aa)). The TSP type-1 1 domain occupies 589-644 (HGQWSAWSKWSECSRTCGGGVKFQERHCNNPKPQYGGLFCPGSSRIYQLCNINPCN). 3 N-linked (GlcNAc...) asparagine glycosylation sites follow: N745, N838, and N909. Residues 750 to 876 (FYKGLYLNQH…TPPATKRPAY (127 aa)) form a spacer region. 4 consecutive TSP type-1 domains span residues 931 to 990 (CPAY…NSHA), 991 to 1049 (CPPQ…GRCP), 1052 to 1116 (SRLQ…RACP), and 1123 to 1178 (MVAG…NFCP). The PLAC domain occupies 1184–1221 (EDPSCVDFFNWCHLVPQHGVCNHKFYGKQCCKSCTRKI).

The cofactor is Zn(2+). Post-translationally, the precursor is cleaved by a furin endopeptidase. Glycosylated. Can be O-fucosylated by POFUT2 on a serine or a threonine residue found within the consensus sequence C1-X(2)-(S/T)-C2-G of the TSP type-1 repeat domains where C1 and C2 are the first and second cysteine residue of the repeat, respectively. Fucosylated repeats can then be further glycosylated by the addition of a beta-1,3-glucose residue by the glucosyltransferase, B3GALTL. Fucosylation mediates the efficient secretion of ADAMTS family members. Can also be C-glycosylated with one or two mannose molecules on tryptophan residues within the consensus sequence W-X-X-W of the TPRs, and N-glycosylated. These other glycosylations can also facilitate secretion. In terms of tissue distribution, expressed in fetal lung, liver, and kidney and in adult brain, prostate, submaxillary gland, and endothelium.

The protein localises to the secreted. It localises to the extracellular space. It is found in the extracellular matrix. The protein is A disintegrin and metalloproteinase with thrombospondin motifs 18 (ADAMTS18) of Homo sapiens (Human).